A 444-amino-acid polypeptide reads, in one-letter code: Trigger factor (444 aa).

The 86-residue stretch at 165–250 (GDFAKFDFEG…LHEIQELKIP (86 aa)) folds into the PPIase FKBP-type domain.

This sequence belongs to the FKBP-type PPIase family. Tig subfamily.

Its subcellular location is the cytoplasm. It carries out the reaction [protein]-peptidylproline (omega=180) = [protein]-peptidylproline (omega=0). Its function is as follows. Involved in protein export. Acts as a chaperone by maintaining the newly synthesized protein in an open conformation. Functions as a peptidyl-prolyl cis-trans isomerase. The sequence is that of Trigger factor from Campylobacter jejuni subsp. jejuni serotype O:6 (strain 81116 / NCTC 11828).